The chain runs to 445 residues: tRNA modification GTPase MnmE (445 aa).

(6S)-5-formyl-5,6,7,8-tetrahydrofolate is bound by residues arginine 20, glutamate 79, and lysine 119. Residues 215–371 (GLKLAIIGPP…ILKNIEEIAE (157 aa)) enclose the TrmE-type G domain. Asparagine 225 contributes to the K(+) binding site. Residues 225–230 (NAGKSS), 244–250 (SNIAGTT), and 269–272 (DTAG) contribute to the GTP site. Position 229 (serine 229) interacts with Mg(2+). Residues serine 244, isoleucine 246, and threonine 249 each coordinate K(+). Threonine 250 contributes to the Mg(2+) binding site. Residue lysine 445 coordinates (6S)-5-formyl-5,6,7,8-tetrahydrofolate.

It belongs to the TRAFAC class TrmE-Era-EngA-EngB-Septin-like GTPase superfamily. TrmE GTPase family. Homodimer. Heterotetramer of two MnmE and two MnmG subunits. K(+) serves as cofactor.

Its subcellular location is the cytoplasm. In terms of biological role, exhibits a very high intrinsic GTPase hydrolysis rate. Involved in the addition of a carboxymethylaminomethyl (cmnm) group at the wobble position (U34) of certain tRNAs, forming tRNA-cmnm(5)s(2)U34. This chain is tRNA modification GTPase MnmE, found in Rickettsia bellii (strain RML369-C).